Here is a 177-residue protein sequence, read N- to C-terminus: Mitochondrial inner membrane protease subunit 2 (177 aa).

Residues S41 and K91 contribute to the active site. Residues 134-152 traverse the membrane as a helical segment; it reads TFGPISSGLVIGKAITIVW.

The protein belongs to the peptidase S26 family. IMP2 subfamily. As to quaternary structure, component of the mitochondrial inner membrane peptidase (IMP) complex which at least consists of IMP1, IMP2 and SOM1. In terms of processing, the N-terminus is blocked.

The protein localises to the mitochondrion inner membrane. Catalytic component of the mitochondrial inner membrane peptidase (IMP) complex. IMP catalyzes the removal of signal peptides required for the targeting of proteins from the mitochondrial matrix, across the inner membrane, into the inter-membrane space. The two catalytic IMP subunits seem to have non-overlapping substrate specificities. IMP2 substrates include nuclear encoded CYB2, mitochondrially encoded COX2 and cytochrome c1. Required for the stability of IMP1. The chain is Mitochondrial inner membrane protease subunit 2 (IMP2) from Saccharomyces cerevisiae (strain ATCC 204508 / S288c) (Baker's yeast).